The primary structure comprises 456 residues: MQQTVTYGAKWKQFLTIFTPIVITQLTLFSMTFFDTTMSGNYSNQALAGVAIGSSFWAPVNAAFSGLLMAITPIIAQLIGAKKEKQVKNTVHNGLYIALFLAFILILINFLVVPMILTHMPVTAEVADIARHFLNGICIGIPAFFISAILRSFIDSLGLTRVTMLITLCTVPFNIFLNYCFIFGNFGFPEMGGAGSGYATGITYWLVVLVSVILIQTQTRLRKFGVFKGLTALRFSKIKEIIGIGVPNGLTILFETSIFSAVTILMGAFGTETIAAHQSANSVCTLLYAFPLSVASTLTILGGYETGAKRLKDAKQYRHIGMAAAILIGCVNGAILFFFRDIIAGFYTNDPALSNLIMHFLVYAILFQFADAVLSPVLGALRGYKDVTVTSIVAFISYWLIGLPVGYGLSFTNLGPFGYWIGLSTGLFVAAFILSIRVRKTEQKLSFNTKDAEISN.

Helical transmembrane passes span 13–34 (QFLT…MTFF), 54–76 (SSFW…PIIA), 95–117 (LYIA…PMIL), 132–154 (HFLN…RSFI), 161–183 (RVTM…CFIF), 193–215 (GAGS…VILI), 244–266 (IGVP…TILM), 286–308 (LLYA…ETGA), 321–343 (GMAA…RDII), 358–380 (MHFL…VLGA), 387–409 (VTVT…GYGL), and 414–436 (LGPF…ILSI).

The protein belongs to the multi antimicrobial extrusion (MATE) (TC 2.A.66.1) family.

The protein resides in the cell membrane. In terms of biological role, multidrug efflux pump. This is Probable multidrug resistance protein NorM (norM) from Listeria monocytogenes serovar 1/2a (strain ATCC BAA-679 / EGD-e).